Consider the following 304-residue polypeptide: Oxygen-dependent coproporphyrinogen-III oxidase (304 aa).

S94 contributes to the substrate binding site. Residues H98 and H108 each coordinate a divalent metal cation. The active-site Proton donor is the H108. Residue 110 to 112 (NVR) coordinates substrate. The a divalent metal cation site is built by H147 and H177. An important for dimerization region spans residues 242 to 277 (YVEFNLVYDRGTLFGLQTGGRTESILMSMPPLVRWQ). 260–262 (GGR) lines the substrate pocket.

It belongs to the aerobic coproporphyrinogen-III oxidase family. As to quaternary structure, homodimer. The cofactor is a divalent metal cation.

It is found in the cytoplasm. It catalyses the reaction coproporphyrinogen III + O2 + 2 H(+) = protoporphyrinogen IX + 2 CO2 + 2 H2O. Its pathway is porphyrin-containing compound metabolism; protoporphyrin-IX biosynthesis; protoporphyrinogen-IX from coproporphyrinogen-III (O2 route): step 1/1. Its function is as follows. Involved in the heme biosynthesis. Catalyzes the aerobic oxidative decarboxylation of propionate groups of rings A and B of coproporphyrinogen-III to yield the vinyl groups in protoporphyrinogen-IX. The sequence is that of Oxygen-dependent coproporphyrinogen-III oxidase from Shewanella amazonensis (strain ATCC BAA-1098 / SB2B).